We begin with the raw amino-acid sequence, 315 residues long: DNA-directed RNA polymerase subunit alpha (315 aa).

Positions 1-228 (MIEIEKPKVD…EHLNLFIDLT (228 aa)) are alpha N-terminal domain (alpha-NTD). Residues 245 to 315 (KEKVLEMTIE…LGLGLKPSEE (71 aa)) form an alpha C-terminal domain (alpha-CTD) region.

Belongs to the RNA polymerase alpha chain family. Homodimer. The RNAP catalytic core consists of 2 alpha, 1 beta, 1 beta' and 1 omega subunit. When a sigma factor is associated with the core the holoenzyme is formed, which can initiate transcription.

It catalyses the reaction RNA(n) + a ribonucleoside 5'-triphosphate = RNA(n+1) + diphosphate. Its function is as follows. DNA-dependent RNA polymerase catalyzes the transcription of DNA into RNA using the four ribonucleoside triphosphates as substrates. This is DNA-directed RNA polymerase subunit alpha from Clostridioides difficile (strain 630) (Peptoclostridium difficile).